Here is a 254-residue protein sequence, read N- to C-terminus: Tryptophan synthase alpha chain (254 aa).

Catalysis depends on proton acceptor residues glutamate 48 and aspartate 59.

This sequence belongs to the TrpA family. As to quaternary structure, tetramer of two alpha and two beta chains.

The catalysed reaction is (1S,2R)-1-C-(indol-3-yl)glycerol 3-phosphate + L-serine = D-glyceraldehyde 3-phosphate + L-tryptophan + H2O. It participates in amino-acid biosynthesis; L-tryptophan biosynthesis; L-tryptophan from chorismate: step 5/5. The alpha subunit is responsible for the aldol cleavage of indoleglycerol phosphate to indole and glyceraldehyde 3-phosphate. The polypeptide is Tryptophan synthase alpha chain (Desulfotalea psychrophila (strain LSv54 / DSM 12343)).